The following is a 326-amino-acid chain: Flap endonuclease 1 (326 aa).

Residues 1 to 100 (MGNADLRSLA…DEVEKRREQR (100 aa)) form an N-domain region. Asp-28, Asp-82, Glu-154, Glu-156, Asp-175, Asp-177, and Asp-225 together coordinate Mg(2+). Residues 118–246 (RVAKLDSRTQ…TAVKDLHEHG (129 aa)) form an I-domain region. Residues 318–326 (VQTGLDRWA) are interaction with PCNA.

This sequence belongs to the XPG/RAD2 endonuclease family. FEN1 subfamily. As to quaternary structure, interacts with PCNA. PCNA stimulates the nuclease activity without altering cleavage specificity. The cofactor is Mg(2+).

Functionally, structure-specific nuclease with 5'-flap endonuclease and 5'-3' exonuclease activities involved in DNA replication and repair. During DNA replication, cleaves the 5'-overhanging flap structure that is generated by displacement synthesis when DNA polymerase encounters the 5'-end of a downstream Okazaki fragment. Binds the unpaired 3'-DNA end and kinks the DNA to facilitate 5' cleavage specificity. Cleaves one nucleotide into the double-stranded DNA from the junction in flap DNA, leaving a nick for ligation. Also involved in the base excision repair (BER) pathway. Acts as a genome stabilization factor that prevents flaps from equilibrating into structures that lead to duplications and deletions. Also possesses 5'-3' exonuclease activity on nicked or gapped double-stranded DNA. The sequence is that of Flap endonuclease 1 from Haloarcula marismortui (strain ATCC 43049 / DSM 3752 / JCM 8966 / VKM B-1809) (Halobacterium marismortui).